The primary structure comprises 386 residues: DNA (cytosine-5)-methyltransferase 3-like (386 aa).

Positions glutamate 41–glutamate 173 constitute an ADD domain. The segment at isoleucine 52–aspartate 82 adopts a GATA-type; atypical zinc-finger fold. Residues glutamine 93 to serine 149 form a PHD-type; atypical zinc finger.

In terms of assembly, homodimer. Heterotetramer composed of 1 DNMT3A homodimer and 2 DNMT3L subunits (DNMT3L-DNMT3A-DNMT3A-DNMT3L). Interacts with histone H3 (via N-terminus); interaction is strongly inhibited by methylation at lysine 4 (H3K4me). Interacts with EZH2; the interaction is direct. Interacts with SPOCD1. In terms of tissue distribution, expressed at low levels in several tissues including testis, ovary, and thymus.

The protein resides in the nucleus. Functionally, catalytically inactive regulatory factor of DNA methyltransferases that can either promote or inhibit DNA methylation depending on the context. Essential for the function of DNMT3A and DNMT3B: activates DNMT3A and DNMT3B by binding to their catalytic domain. Acts by accelerating the binding of DNA and S-adenosyl-L-methionine (AdoMet) to the methyltransferases and dissociates from the complex after DNA binding to the methyltransferases. Recognizes unmethylated histone H3 lysine 4 (H3K4me0) and induces de novo DNA methylation by recruitment or activation of DNMT3. Plays a key role in embryonic stem cells and germ cells. In germ cells, required for the methylation of imprinted loci together with DNMT3A. In male germ cells, specifically required to methylate retrotransposons, preventing their mobilization. Plays a key role in embryonic stem cells (ESCs) by acting both as an positive and negative regulator of DNA methylation. While it promotes DNA methylation of housekeeping genes together with DNMT3A and DNMT3B, it also acts as an inhibitor of DNA methylation at the promoter of bivalent genes. Interacts with the EZH2 component of the PRC2/EED-EZH2 complex, preventing interaction of DNMT3A and DNMT3B with the PRC2/EED-EZH2 complex, leading to maintain low methylation levels at the promoters of bivalent genes. Promotes differentiation of ESCs into primordial germ cells by inhibiting DNA methylation at the promoter of RHOX5, thereby activating its expression. This Homo sapiens (Human) protein is DNA (cytosine-5)-methyltransferase 3-like (DNMT3L).